The sequence spans 154 residues: Avirulence protein ATR13 (154 aa).

The signal sequence occupies residues 1–19 (MRLVHAVLLPGIIVFVSNG). The short motif at 38–41 (RQLR) is the RxLR element. The interval 50-92 (LSRASFGLGKAQDPLDKFFSKIIFSGKPIETSYSAKGIHEKII) is leucine heptad repeat region. A single repeat region region spans residues 93-103 (EAHDLHVSKSK). The interval 104–154 (NAPIQYASVMEYLKKTYPGPDIERIVSTLERHDEVGAKDLGAKLRDALDRQ) is highly variable C-terminus domain.

This sequence belongs to the RxLR effector family.

The protein resides in the secreted. The protein localises to the host cytoplasm. In terms of biological role, secreted effector that acts as an elicitor of hypersensitive response (HR) specifically on plants carrying defense protein RPP13. Recognition of ATR13 by RPP13 initiates defense responses that are effective against oomycete, bacterial and viral pathogens. The allele ATR13-Emco5 recognizes RPP13-Nd, the RPP13 defense protein from Arabidopsis thaliana ecotype Niederzenz. This Hyaloperonospora arabidopsidis (Peronospora arabidopsidis) protein is Avirulence protein ATR13.